The following is a 211-amino-acid chain: Ubiquitin-conjugating enzyme E2 S (211 aa).

The UBC core domain maps to 11 to 157 (HIIRQVYKEV…ARLMTEIHAQ (147 aa)). The active-site Glycyl thioester intermediate is Cys95. A disordered region spans residues 157 to 211 (QGSSLRGKDPTDPCSSASATLVSGDGPMAKKHAGDRDKKLAAKKKTDKKRALRRL). The span at 197 to 211 (AAKKKTDKKRALRRL) shows a compositional bias: basic residues.

The protein belongs to the ubiquitin-conjugating enzyme family.

It catalyses the reaction S-ubiquitinyl-[E1 ubiquitin-activating enzyme]-L-cysteine + [E2 ubiquitin-conjugating enzyme]-L-cysteine = [E1 ubiquitin-activating enzyme]-L-cysteine + S-ubiquitinyl-[E2 ubiquitin-conjugating enzyme]-L-cysteine.. Its pathway is protein modification; protein ubiquitination. Functionally, catalyzes the covalent attachment of ubiquitin to other proteins. Acts as an essential factor of the anaphase promoting complex/cyclosome (APC/C), a cell cycle-regulated ubiquitin ligase that controls progression through mitosis. Acts by specifically elongating 'Lys-11'-linked polyubiquitin chains initiated by the E2 enzyme ube2c/ubch10 on APC/C substrates, enhancing the degradation of APC/C substrates by the proteasome and promoting mitotic exit. The sequence is that of Ubiquitin-conjugating enzyme E2 S (ube2s) from Xenopus tropicalis (Western clawed frog).